The sequence spans 539 residues: Probable quinate permease (539 aa).

Residues 1 to 22 (MSILSMVEDRPTPKEVYNWRIY) lie on the Cytoplasmic side of the membrane. The chain crosses the membrane as a helical span at residues 23-43 (LLAAVASFTSCMIGYDSAFIG). At 44 to 74 (TTISLDSFKNEFHWDSMSTAKQNLVSANIVS) the chain is on the extracellular side. Residues 75-95 (CYQAGAFFGAFFAYPIGHFWG) traverse the membrane as a helical segment. Residues 96–97 (RK) lie on the Cytoplasmic side of the membrane. A helical membrane pass occupies residues 98–118 (WGLMLSALVFTLGAGLMLGAN). At 119–130 (GDRGLGLIYGGR) the chain is on the extracellular side. A helical transmembrane segment spans residues 131-151 (VLAGLGVGAGSNFTPIYISEL). Topologically, residues 152–159 (APPAIRGR) are cytoplasmic. Residues 160–180 (LVGVYELGWQVGGLVGFWINY) traverse the membrane as a helical segment. Residues 181–193 (GVEQTMAPSHKQW) lie on the Extracellular side of the membrane. A helical membrane pass occupies residues 194–214 (LIPFAVQLIPAGLLIIGILFV). At 215–285 (KESPRWLFLR…AWTNKRILYR (71 aa)) the chain is on the cytoplasmic side. A helical membrane pass occupies residues 286–306 (LFLGSMLFFWQNGSGINAINY). Over 307–325 (YSPTVFKSIGLKGNSSSLL) the chain is Extracellular. A helical membrane pass occupies residues 326-346 (TTGIFGVVKTVVTIVWLLYLI). Topologically, residues 347 to 352 (DHVGRR) are cytoplasmic. A helical membrane pass occupies residues 353 to 373 (LLLLIGAAGGSICMWIVGAYI). Over 374–387 (KVVDPTHNQSDHLN) the chain is Extracellular. The chain crosses the membrane as a helical span at residues 388-408 (GGGVAAIFFFYLWTAFYTPSW). Topologically, residues 409–456 (NGTPWVINSEMFDPNIRSLAQACAAGSNWLWNFLISRFTPQMFAKMDY) are cytoplasmic. Residues 457 to 477 (GVYFFFASLMLLSIPFVFFLV) traverse the membrane as a helical segment. Over 478-539 (PETKGIPLEN…EQVEDTDRKE (62 aa)) the chain is Extracellular.

The protein belongs to the major facilitator superfamily. Sugar transporter (TC 2.A.1.1) family. As to quaternary structure, interacts with creB. In terms of processing, ubiquitinated. Deubiquitinated by creB, probably to control its activity or amount.

The protein resides in the cell membrane. In terms of biological role, integral membrane transporter that imports quinic acid to be catabolized as a carbon source. This is Probable quinate permease (qutD) from Aspergillus niger (strain ATCC MYA-4892 / CBS 513.88 / FGSC A1513).